The sequence spans 430 residues: Histidine--tRNA ligase (430 aa).

The protein belongs to the class-II aminoacyl-tRNA synthetase family. As to quaternary structure, homodimer.

Its subcellular location is the cytoplasm. The catalysed reaction is tRNA(His) + L-histidine + ATP = L-histidyl-tRNA(His) + AMP + diphosphate + H(+). The chain is Histidine--tRNA ligase from Acinetobacter baylyi (strain ATCC 33305 / BD413 / ADP1).